A 338-amino-acid polypeptide reads, in one-letter code: Activator of 90 kDa heat shock protein ATPase homolog 1 (338 aa).

Lysine 3 carries the N6-acetyllysine modification. A Glycyl lysine isopeptide (Lys-Gly) (interchain with G-Cter in SUMO1) cross-link involves residue lysine 182. Phosphoserine is present on serine 193. Residue lysine 203 forms a Glycyl lysine isopeptide (Lys-Gly) (interchain with G-Cter in SUMO2) linkage. N6-acetyllysine is present on lysine 212. Tyrosine 223 is subject to Phosphotyrosine; by ABL.

The protein belongs to the AHA1 family. As to quaternary structure, interacts with HSPCA/HSP90. Interacts with HSP90AA1; the interaction activates HSP90AA1 ATPase activity. Interacts with HSP90AB1. Interacts with GCH1. Interacts with SRPK1. Interacts with FLCN. Post-translationally, phosphorylation at Tyr-223 enhances binding to chaperone HSP90AA1.

Its subcellular location is the cytoplasm. The protein localises to the cytosol. The protein resides in the endoplasmic reticulum. Functionally, acts as a co-chaperone of HSP90AA1. Activates the ATPase activity of HSP90AA1 leading to increase in its chaperone activity. Competes with the inhibitory co-chaperone FNIP1 for binding to HSP90AA1, thereby providing a reciprocal regulatory mechanism for chaperoning of client proteins. Competes with the inhibitory co-chaperone TSC1 for binding to HSP90AA1, thereby providing a reciprocal regulatory mechanism for chaperoning of client proteins. The polypeptide is Activator of 90 kDa heat shock protein ATPase homolog 1 (Ahsa1) (Mus musculus (Mouse)).